A 474-amino-acid polypeptide reads, in one-letter code: tRNA-2-methylthio-N(6)-dimethylallyladenosine synthase (474 aa).

The 118-residue stretch at 3–120 (KKLHIKTWGC…LPEMIDQVQR (118 aa)) folds into the MTTase N-terminal domain. 6 residues coordinate [4Fe-4S] cluster: Cys-12, Cys-49, Cys-83, Cys-157, Cys-161, and Cys-164. A Radical SAM core domain is found at 143 to 375 (RADGPTAFVS…QDRITQQAMR (233 aa)). The TRAM domain occupies 378 to 441 (RQMLGTVQRI…TNSLRGIFIR (64 aa)).

It belongs to the methylthiotransferase family. MiaB subfamily. In terms of assembly, monomer. Requires [4Fe-4S] cluster as cofactor.

The protein localises to the cytoplasm. The catalysed reaction is N(6)-dimethylallyladenosine(37) in tRNA + (sulfur carrier)-SH + AH2 + 2 S-adenosyl-L-methionine = 2-methylsulfanyl-N(6)-dimethylallyladenosine(37) in tRNA + (sulfur carrier)-H + 5'-deoxyadenosine + L-methionine + A + S-adenosyl-L-homocysteine + 2 H(+). Functionally, catalyzes the methylthiolation of N6-(dimethylallyl)adenosine (i(6)A), leading to the formation of 2-methylthio-N6-(dimethylallyl)adenosine (ms(2)i(6)A) at position 37 in tRNAs that read codons beginning with uridine. The protein is tRNA-2-methylthio-N(6)-dimethylallyladenosine synthase of Shewanella denitrificans (strain OS217 / ATCC BAA-1090 / DSM 15013).